The following is a 42-amino-acid chain: Photosystem I reaction center subunit IX (42 aa).

The chain crosses the membrane as a helical span at residues 7–27 (YLSTAPVLAAIWFAILAGLLI).

Belongs to the PsaJ family.

Its subcellular location is the plastid. It is found in the chloroplast thylakoid membrane. Functionally, may help in the organization of the PsaE and PsaF subunits. The sequence is that of Photosystem I reaction center subunit IX from Zygnema circumcarinatum (Green alga).